The primary structure comprises 161 residues: MSVTLHTTSGDIKIELYVDDAPKACENFLALCASDYYNGCIFHRNIKDFMVQTGDPTHSGKGGESIWGGPFEDEFVSALKHDSRGCVSMANNGPDSNRSQFFITYAKQAHLDMKYTLFGKVIDGFDTLEEIETIKVDNKYRPLVQQKIQNVTIHANPMAAD.

One can recognise a PPIase cyclophilin-type domain in the interval 1 to 153 (MSVTLHTTSG…VQQKIQNVTI (153 aa)).

It belongs to the cyclophilin-type PPIase family. PPIL3 subfamily.

It catalyses the reaction [protein]-peptidylproline (omega=180) = [protein]-peptidylproline (omega=0). PPIases accelerate the folding of proteins. It catalyzes the cis-trans isomerization of proline imidic peptide bonds in oligopeptides. The sequence is that of Peptidyl-prolyl cis-trans isomerase 10 (cyn-10) from Caenorhabditis elegans.